A 964-amino-acid chain; its full sequence is Phosphoenolpyruvate carboxylase (964 aa).

S11 bears the Phosphoserine mark. Active-site residues include H172 and K600.

It belongs to the PEPCase type 1 family. Homotetramer. The cofactor is Mg(2+).

The protein resides in the cytoplasm. The enzyme catalyses oxaloacetate + phosphate = phosphoenolpyruvate + hydrogencarbonate. It functions in the pathway photosynthesis; C4 acid pathway. By light-reversible phosphorylation. Functionally, through the carboxylation of phosphoenolpyruvate (PEP) it forms oxaloacetate, a four-carbon dicarboxylic acid source for the tricarboxylic acid cycle. This Nicotiana tabacum (Common tobacco) protein is Phosphoenolpyruvate carboxylase (PPC).